The following is a 139-amino-acid chain: Large ribosomal subunit protein eL32 (139 aa).

This sequence belongs to the eukaryotic ribosomal protein eL32 family.

The sequence is that of Large ribosomal subunit protein eL32 (RPL32) from Encephalitozoon cuniculi (strain GB-M1) (Microsporidian parasite).